The primary structure comprises 652 residues: WD repeat-containing protein 70 (652 aa).

2 disordered regions span residues 1 to 22 (MERP…LAVT) and 45 to 171 (RRTA…IPDS). Basic and acidic residues predominate over residues 45 to 76 (RRTAVERSRKTLEAREREEEMNREKELRRQNE). Positions 92 to 102 (SKSSSRDTSSS) are enriched in low complexity. Composition is skewed to acidic residues over residues 103-115 (ESDE…DDEL) and 146-162 (EDVE…EEEE). 7 WD repeats span residues 178–217 (HGTK…ASFK), 225–266 (CECH…ECIK), 279–319 (GHTA…KQKS), 328–367 (GKKV…HPKF), 374–413 (DPGT…KPLF), 419–464 (PTMF…RVYE), and 467–506 (ITDA…QRGA). Lysine 294 is covalently cross-linked (Glycyl lysine isopeptide (Lys-Gly) (interchain with G-Cter in SUMO2)). Lysine 450 is modified (N6-acetyllysine). Over residues 538 to 563 (REPRQRSTRKQLEKDRLDPLKSHKPE) the composition is skewed to basic and acidic residues. Positions 538-577 (REPRQRSTRKQLEKDRLDPLKSHKPEPPVAGPGRGGRVGT) are disordered. Residue threonine 577 is modified to Phosphothreonine. Residues lysine 588 and lysine 594 each participate in a glycyl lysine isopeptide (Lys-Gly) (interchain with G-Cter in SUMO2) cross-link. Residues serine 619 and serine 636 each carry the phosphoserine modification. Residues 629 to 652 (TMFAQVESDDEETKNEPEWKKRKI) form a disordered region. Residues 642 to 652 (KNEPEWKKRKI) are compositionally biased toward basic and acidic residues.

This sequence belongs to the WD repeat GAD-1 family.

This Bos taurus (Bovine) protein is WD repeat-containing protein 70 (WDR70).